The following is a 143-amino-acid chain: Anti-sigma F factor (143 aa).

It belongs to the anti-sigma-factor family.

The catalysed reaction is L-seryl-[protein] + ATP = O-phospho-L-seryl-[protein] + ADP + H(+). The enzyme catalyses L-threonyl-[protein] + ATP = O-phospho-L-threonyl-[protein] + ADP + H(+). In terms of biological role, binds to sigma F and blocks its ability to form an RNA polymerase holoenzyme (E-sigma F). Phosphorylates SpoIIAA on a serine residue. This phosphorylation may enable SpoIIAA to act as an anti-anti-sigma factor that counteracts SpoIIAB and thus releases sigma F from inhibition. This chain is Anti-sigma F factor, found in Thermoanaerobacter pseudethanolicus (strain ATCC 33223 / 39E) (Clostridium thermohydrosulfuricum).